The following is a 294-amino-acid chain: 4-hydroxy-tetrahydrodipicolinate synthase (294 aa).

T45 provides a ligand contact to pyruvate. The Proton donor/acceptor role is filled by Y133. K161 (schiff-base intermediate with substrate) is an active-site residue. I203 is a binding site for pyruvate.

The protein belongs to the DapA family. In terms of assembly, homotetramer; dimer of dimers.

The protein localises to the cytoplasm. It carries out the reaction L-aspartate 4-semialdehyde + pyruvate = (2S,4S)-4-hydroxy-2,3,4,5-tetrahydrodipicolinate + H2O + H(+). The protein operates within amino-acid biosynthesis; L-lysine biosynthesis via DAP pathway; (S)-tetrahydrodipicolinate from L-aspartate: step 3/4. In terms of biological role, catalyzes the condensation of (S)-aspartate-beta-semialdehyde [(S)-ASA] and pyruvate to 4-hydroxy-tetrahydrodipicolinate (HTPA). This is 4-hydroxy-tetrahydrodipicolinate synthase from Shewanella frigidimarina (strain NCIMB 400).